We begin with the raw amino-acid sequence, 395 residues long: GPI-anchor transamidase (395 aa).

The signal sequence occupies residues 1-27 (MVDTCFLSRGLTTLAGLLLLPFGSLAA). Residues 28-368 (SQIEDQAEQF…PKLKDWHPPG (341 aa)) are Lumenal-facing. 4 residues coordinate Ca(2+): D79, I82, E118, and D120. H164 functions as the Proton donor in the catalytic mechanism. Catalysis depends on C206, which acts as the Nucleophile; acyl-thioester intermediate. Residues C206, S232, and S234 each coordinate a protein. Positions 231 to 236 (DSLSHQ) are autoinhibitory loop. C275 and C280 are oxidised to a cystine. The chain crosses the membrane as a helical span at residues 369–385 (GFILGLWALIIMVFFKT). At 386–395 (YGIKHMKFIF) the chain is on the cytoplasmic side.

The protein belongs to the peptidase C13 family. In terms of assembly, heteropentamer. Part of the GPI-anchor transamidase complex, consisting of PIGK, PIGT, PIGS, PIGU and GAA1. Interacts with GPAA1. Interacts with PIGT; this interaction, via a disulfide link, stabilizes the expression of GAA1 and PIGK and links them to PIGS. In terms of processing, the disulfide bond between PIGK/GPI8 and PIGT is important for normal enzyme activity.

It is found in the endoplasmic reticulum membrane. Its pathway is glycolipid biosynthesis; glycosylphosphatidylinositol-anchor biosynthesis. Its activity is regulated as follows. In the absence of proproteins substrates, exists in an inactive state with a disrupted catalytic site by an autoinhibitory loop. The binding of proprotein substrates, particularly the CSP region, to GPI-T triggers concerted conformational changes that alleviate the inhibition by the autoinhibitory loop. Meanwhile, proprotein residues near the omega- site induce the formation of a catalytic cleft for catalysis, following which the products are released and GPI-T reverts to the inactive state. Catalytic subunit of the glycosylphosphatidylinositol-anchor (GPI-anchor) transamidase (GPI-T) complex that catalyzes the formation of the linkage between a proprotein and a GPI-anchor and participates in GPI anchored protein biosynthesis. Recognizes diverse proproteins at a C-terminal signal peptide (CSP) region that lacks consensus sequence and replaces it with a GPI-anchor via a transamidation reaction. Transamidation catalysis reaction follows a two-phase mechanism. In the acyl-enzyme phase, the carbonyl group of the proproteins's omega-site undergoes a nucleophilic attack forming an enzyme-substrate thioester bond. Followed by a general acid catalysis that allows CSP releasing, regenerating the carbonyl, and forming the acyl-enzyme intermediate. In the GPI-anchor attachment phase, the amino group of the GPI-anchor's ethanolamine phosphate, the one on third mannose (EtNP3), mediates a nucleophilic attack on the carbonyl of the acyl-enzyme intermediate, replacing the CSP, allowing GPI-anchor attachment to the omega-residue, therefore forming the product and freeing the enzyme. In Bos taurus (Bovine), this protein is GPI-anchor transamidase.